The primary structure comprises 784 residues: Protein translocase subunit SecA 2 (784 aa).

Residues Gln-94, 112–116, and Asp-501 contribute to the ATP site; that span reads GEGKT.

This sequence belongs to the SecA family. In terms of assembly, monomer and homodimer. Part of the essential Sec protein translocation apparatus which comprises SecA, SecYEG and auxiliary proteins SecDF. Other proteins may also be involved.

It localises to the cell membrane. The protein resides in the cytoplasm. The enzyme catalyses ATP + H2O + cellular proteinSide 1 = ADP + phosphate + cellular proteinSide 2.. Part of the Sec protein translocase complex. Interacts with the SecYEG preprotein conducting channel. Has a central role in coupling the hydrolysis of ATP to the transfer of proteins into and across the cell membrane, serving as an ATP-driven molecular motor driving the stepwise translocation of polypeptide chains across the membrane. The polypeptide is Protein translocase subunit SecA 2 (Mycolicibacterium smegmatis (strain ATCC 700084 / mc(2)155) (Mycobacterium smegmatis)).